The primary structure comprises 619 residues: Pentatricopeptide repeat-containing protein At1g68980, mitochondrial (619 aa).

The N-terminal 100 residues, 1-100, are a transit peptide targeting the mitochondrion; sequence MLRKTLTLIS…RAFVSTTYVI (100 aa). 10 PPR repeats span residues 186-221, 222-256, 257-292, 295-329, 366-400, 401-435, 436-466, 472-506, 507-541, and 542-576; these read DLVASNAALEACCRQMESLADAENLIESMDVLGVKP, DELSFGFLAYLYARKGLREKISELEDLMDGLGFAS, RRILYSSMISGYVKSGDLDSASDVILCSLKGVGEAS, SEETYCELVRGFIESKSVESLAKLIIEAQKLESMS, GIGVYVPILKAYCKEGRTSEATQLVTEISSSGLQL, DVETYNTMIEASMTKHDFLSALTLFRDMRETRVAD, LKRCYLTIMTGLLENQRPELMAEFVEEVMED, KSHDWNSIIHAFCKSGRLGDAKSTFRRMTFLQYEP, NNQTYLSLINGYVSCEKYFEVVVIWKEFKDKKAKL, and EHALADAFLNALVKGGFFGTALQVIEKCQEMKIFV.

This sequence belongs to the PPR family. P subfamily.

The protein localises to the mitochondrion. The sequence is that of Pentatricopeptide repeat-containing protein At1g68980, mitochondrial from Arabidopsis thaliana (Mouse-ear cress).